Consider the following 56-residue polypeptide: Small ribosomal subunit protein uS14 (56 aa).

Zn(2+) is bound by residues C21, C24, C39, and C42.

The protein belongs to the universal ribosomal protein uS14 family. The cofactor is Zn(2+).

This Triticum aestivum (Wheat) protein is Small ribosomal subunit protein uS14 (RPS29).